Consider the following 455-residue polypeptide: Bifunctional protein GlmU (455 aa).

The interval 1 to 226 (MALNVVILAA…AIEVEGANNR (226 aa)) is pyrophosphorylase. UDP-N-acetyl-alpha-D-glucosamine contacts are provided by residues 8–11 (LAAG), K22, Q73, 78–79 (GT), 100–102 (YGD), G137, E151, N166, and N224. Residue D102 coordinates Mg(2+). Residue N224 coordinates Mg(2+). Positions 227 to 247 (VQLAQLERAYQARAAEKLMLE) are linker. The segment at 248–455 (GANLRDPARL…WARPVKKPKS (208 aa)) is N-acetyltransferase. Positions 330 and 348 each coordinate UDP-N-acetyl-alpha-D-glucosamine. H360 functions as the Proton acceptor in the catalytic mechanism. The UDP-N-acetyl-alpha-D-glucosamine site is built by Y363 and N374. Acetyl-CoA-binding positions include A377, 383–384 (NY), S402, A420, and R437.

In the N-terminal section; belongs to the N-acetylglucosamine-1-phosphate uridyltransferase family. The protein in the C-terminal section; belongs to the transferase hexapeptide repeat family. As to quaternary structure, homotrimer. Mg(2+) is required as a cofactor.

The protein resides in the cytoplasm. The catalysed reaction is alpha-D-glucosamine 1-phosphate + acetyl-CoA = N-acetyl-alpha-D-glucosamine 1-phosphate + CoA + H(+). The enzyme catalyses N-acetyl-alpha-D-glucosamine 1-phosphate + UTP + H(+) = UDP-N-acetyl-alpha-D-glucosamine + diphosphate. The protein operates within nucleotide-sugar biosynthesis; UDP-N-acetyl-alpha-D-glucosamine biosynthesis; N-acetyl-alpha-D-glucosamine 1-phosphate from alpha-D-glucosamine 6-phosphate (route II): step 2/2. It participates in nucleotide-sugar biosynthesis; UDP-N-acetyl-alpha-D-glucosamine biosynthesis; UDP-N-acetyl-alpha-D-glucosamine from N-acetyl-alpha-D-glucosamine 1-phosphate: step 1/1. Its pathway is bacterial outer membrane biogenesis; LPS lipid A biosynthesis. Its function is as follows. Catalyzes the last two sequential reactions in the de novo biosynthetic pathway for UDP-N-acetylglucosamine (UDP-GlcNAc). The C-terminal domain catalyzes the transfer of acetyl group from acetyl coenzyme A to glucosamine-1-phosphate (GlcN-1-P) to produce N-acetylglucosamine-1-phosphate (GlcNAc-1-P), which is converted into UDP-GlcNAc by the transfer of uridine 5-monophosphate (from uridine 5-triphosphate), a reaction catalyzed by the N-terminal domain. This is Bifunctional protein GlmU from Shewanella sediminis (strain HAW-EB3).